Consider the following 70-residue polypeptide: ATP synthase subunit c (70 aa).

The next 2 membrane-spanning stretches (helical) occupy residues 4-24 (IAAA…NGLI) and 45-65 (LMFI…VIAF).

It belongs to the ATPase C chain family. In terms of assembly, F-type ATPases have 2 components, F(1) - the catalytic core - and F(0) - the membrane proton channel. F(1) has five subunits: alpha(3), beta(3), gamma(1), delta(1), epsilon(1). F(0) has three main subunits: a(1), b(2) and c(10-14). The alpha and beta chains form an alternating ring which encloses part of the gamma chain. F(1) is attached to F(0) by a central stalk formed by the gamma and epsilon chains, while a peripheral stalk is formed by the delta and b chains.

It localises to the cell membrane. Its function is as follows. F(1)F(0) ATP synthase produces ATP from ADP in the presence of a proton or sodium gradient. F-type ATPases consist of two structural domains, F(1) containing the extramembraneous catalytic core and F(0) containing the membrane proton channel, linked together by a central stalk and a peripheral stalk. During catalysis, ATP synthesis in the catalytic domain of F(1) is coupled via a rotary mechanism of the central stalk subunits to proton translocation. This chain is ATP synthase subunit c, found in Bacillus pumilus (strain SAFR-032).